Here is a 438-residue protein sequence, read N- to C-terminus: Adenosylhomocysteinase (438 aa).

The substrate site is built by T61, D137, and E162. Residue 163 to 165 (TTT) coordinates NAD(+). Substrate-binding residues include K192 and D196. NAD(+) is bound by residues N197, 226–231 (GYGDVG), E249, N284, 305–307 (IGH), and N352.

The protein belongs to the adenosylhomocysteinase family. NAD(+) serves as cofactor.

It localises to the cytoplasm. It catalyses the reaction S-adenosyl-L-homocysteine + H2O = L-homocysteine + adenosine. Its pathway is amino-acid biosynthesis; L-homocysteine biosynthesis; L-homocysteine from S-adenosyl-L-homocysteine: step 1/1. In terms of biological role, may play a key role in the regulation of the intracellular concentration of adenosylhomocysteine. The protein is Adenosylhomocysteinase of Christiangramia forsetii (strain DSM 17595 / CGMCC 1.15422 / KT0803) (Gramella forsetii).